Reading from the N-terminus, the 411-residue chain is Protein translocase subunit SecY (411 aa).

10 consecutive transmembrane segments (helical) span residues Phe13–Asp33, Ile52–Ile72, Ala111–Phe131, Phe135–Leu155, Gly163–Leu180, Ser197–Val217, Gly252–Leu272, Leu291–Val311, Phe350–Ala370, and Gly377–Ile397.

This sequence belongs to the SecY/SEC61-alpha family. In terms of assembly, component of the plastid Sec protein translocase complex, which is composed of at least SecY, SecE and SecG.

Its subcellular location is the plastid. The protein resides in the chloroplast thylakoid membrane. Functionally, the central subunit of the protein translocation channel SecYE. Consists of two halves formed by TMs 1-5 and 6-10. These two domains form a lateral gate at the front which open onto the bilayer between TMs 2 and 7, and are clamped together by SecE at the back. The channel is closed by both a pore ring composed of hydrophobic SecY resides and a short helix (helix 2A) on the extracellular side of the membrane which forms a plug. In Porphyra purpurea (Red seaweed), this protein is Protein translocase subunit SecY.